Consider the following 307-residue polypeptide: Putative F-box/LRR-repeat protein 22 (307 aa).

Residues 1-15 (MVTSSSSPPLATSQL) show a composition bias toward polar residues. The disordered stretch occupies residues 1–26 (MVTSSSSPPLATSQLPVMKGEEKPSN). The region spanning 24–71 (PSNWAELPPDLLSSILLRLSPLEILENARKVCRSWRRVSKDPLIWRRI) is the F-box domain. LRR repeat units lie at residues 108-133 (WRFQ…RVKG), 158-183 (YCSI…KLVG), 185-210 (WSHL…HLQL), 212-237 (SNGL…DLRQ), and 244-270 (FGDL…DYNY). Positions 279-289 (IEDEKGEEEEN) are enriched in acidic residues. Residues 279 to 307 (IEDEKGEEEENYSYGSDDTEYGYRRSADF) form a disordered region.

The sequence is that of Putative F-box/LRR-repeat protein 22 (FBL22) from Arabidopsis thaliana (Mouse-ear cress).